A 120-amino-acid polypeptide reads, in one-letter code: Phosphoribosyl-AMP cyclohydrolase (120 aa).

Aspartate 75 contacts Mg(2+). Cysteine 76 contributes to the Zn(2+) binding site. The Mg(2+) site is built by aspartate 77 and aspartate 79. Zn(2+) is bound by residues cysteine 92 and cysteine 99.

This sequence belongs to the PRA-CH family. In terms of assembly, homodimer. Mg(2+) is required as a cofactor. The cofactor is Zn(2+).

It is found in the cytoplasm. The catalysed reaction is 1-(5-phospho-beta-D-ribosyl)-5'-AMP + H2O = 1-(5-phospho-beta-D-ribosyl)-5-[(5-phospho-beta-D-ribosylamino)methylideneamino]imidazole-4-carboxamide. The protein operates within amino-acid biosynthesis; L-histidine biosynthesis; L-histidine from 5-phospho-alpha-D-ribose 1-diphosphate: step 3/9. Its function is as follows. Catalyzes the hydrolysis of the adenine ring of phosphoribosyl-AMP. This is Phosphoribosyl-AMP cyclohydrolase from Haloarcula marismortui (strain ATCC 43049 / DSM 3752 / JCM 8966 / VKM B-1809) (Halobacterium marismortui).